Here is a 331-residue protein sequence, read N- to C-terminus: UDP-GalNAc:beta-1,3-N-acetylgalactosaminyltransferase 1 (331 aa).

At 1 to 20 (MAPAVLTAIPNRMSLRSLKW) the chain is on the cytoplasmic side. Residues 21-43 (SLLLLSLLSFLVIWYLSLPHYNV) form a helical; Signal-anchor for type II membrane protein membrane-spanning segment. The Lumenal segment spans residues 44–331 (IERVNWMYFY…VMLRNTTCHY (288 aa)). Residues Asn72, Asn154, Asn198, Asn212, and Asn326 are each glycosylated (N-linked (GlcNAc...) asparagine).

It belongs to the glycosyltransferase 31 family. The cofactor is Mg(2+).

The protein localises to the golgi apparatus membrane. The enzyme catalyses a globoside Gb3Cer (d18:1(4E)) + UDP-N-acetyl-alpha-D-galactosamine = a globoside Gb4Cer (d18:1(4E)) + UDP + H(+). It functions in the pathway protein modification; protein glycosylation. Transfers N-acetylgalactosamine onto globotriaosylceramide. Plays a critical role in preimplantation stage embryonic development. The protein is UDP-GalNAc:beta-1,3-N-acetylgalactosaminyltransferase 1 (B3galnt1) of Rattus norvegicus (Rat).